Consider the following 275-residue polypeptide: Phosphonoacetaldehyde hydrolase (275 aa).

The Nucleophile role is filled by D15. Mg(2+)-binding residues include D15 and A17. Catalysis depends on K56, which acts as the Schiff-base intermediate with substrate. Position 189 (D189) interacts with Mg(2+).

Belongs to the HAD-like hydrolase superfamily. PhnX family. Homodimer. Mg(2+) serves as cofactor.

The catalysed reaction is phosphonoacetaldehyde + H2O = acetaldehyde + phosphate + H(+). Its function is as follows. Involved in phosphonate degradation. In Pseudomonas fluorescens (strain Pf0-1), this protein is Phosphonoacetaldehyde hydrolase.